We begin with the raw amino-acid sequence, 643 residues long: Phosphomethylpyrimidine synthase (643 aa).

Substrate-binding positions include Asn-248, Met-277, Tyr-306, His-342, 362–364 (SRG), 403–406 (DGLR), and Glu-442. His-446 contributes to the Zn(2+) binding site. A substrate-binding site is contributed by Tyr-469. His-510 is a Zn(2+) binding site. Cys-590, Cys-593, and Cys-598 together coordinate [4Fe-4S] cluster.

This sequence belongs to the ThiC family. Homodimer. [4Fe-4S] cluster serves as cofactor.

It carries out the reaction 5-amino-1-(5-phospho-beta-D-ribosyl)imidazole + S-adenosyl-L-methionine = 4-amino-2-methyl-5-(phosphooxymethyl)pyrimidine + CO + 5'-deoxyadenosine + formate + L-methionine + 3 H(+). It functions in the pathway cofactor biosynthesis; thiamine diphosphate biosynthesis. Catalyzes the synthesis of the hydroxymethylpyrimidine phosphate (HMP-P) moiety of thiamine from aminoimidazole ribotide (AIR) in a radical S-adenosyl-L-methionine (SAM)-dependent reaction. This chain is Phosphomethylpyrimidine synthase, found in Burkholderia lata (strain ATCC 17760 / DSM 23089 / LMG 22485 / NCIMB 9086 / R18194 / 383).